A 100-amino-acid chain; its full sequence is Urease subunit gamma (100 aa).

Belongs to the urease gamma subunit family. Heterotrimer of UreA (gamma), UreB (beta) and UreC (alpha) subunits. Three heterotrimers associate to form the active enzyme.

Its subcellular location is the cytoplasm. It catalyses the reaction urea + 2 H2O + H(+) = hydrogencarbonate + 2 NH4(+). It participates in nitrogen metabolism; urea degradation; CO(2) and NH(3) from urea (urease route): step 1/1. In Dinoroseobacter shibae (strain DSM 16493 / NCIMB 14021 / DFL 12), this protein is Urease subunit gamma.